Consider the following 281-residue polypeptide: Putative dehydrogenase/reductase SDR family member 4-like 1 (281 aa).

36 to 60 (LVTASTDWIGFAVAQRLAQDGAHVV) is a binding site for NADP(+). S172 provides a ligand contact to substrate. Catalysis depends on Y185, which acts as the Proton acceptor. K189 provides a ligand contact to NADP(+). Residues 279–281 (SRL) carry the Peroxisomal targeting signal motif.

Belongs to the short-chain dehydrogenases/reductases (SDR) family.

Functionally, putative oxidoreductase. This chain is Putative dehydrogenase/reductase SDR family member 4-like 1, found in Homo sapiens (Human).